Here is a 179-residue protein sequence, read N- to C-terminus: Large ribosomal subunit protein uL5 (179 aa).

The protein belongs to the universal ribosomal protein uL5 family. Part of the 50S ribosomal subunit; part of the 5S rRNA/L5/L18/L25 subcomplex. Contacts the 5S rRNA and the P site tRNA. Forms a bridge to the 30S subunit in the 70S ribosome.

Functionally, this is one of the proteins that bind and probably mediate the attachment of the 5S RNA into the large ribosomal subunit, where it forms part of the central protuberance. In the 70S ribosome it contacts protein S13 of the 30S subunit (bridge B1b), connecting the 2 subunits; this bridge is implicated in subunit movement. Contacts the P site tRNA; the 5S rRNA and some of its associated proteins might help stabilize positioning of ribosome-bound tRNAs. The polypeptide is Large ribosomal subunit protein uL5 (Geobacter sp. (strain M21)).